The following is a 278-amino-acid chain: HTH-type transcriptional activator RhaS (278 aa).

Positions asparagine 174 to glycine 272 constitute an HTH araC/xylS-type domain. 2 DNA-binding regions (H-T-H motif) span residues glutamate 191–threonine 212 and valine 239–phenylalanine 262.

In terms of assembly, binds DNA as a dimer.

The protein localises to the cytoplasm. Activates expression of the rhaBAD and rhaT operons. The polypeptide is HTH-type transcriptional activator RhaS (Citrobacter koseri (strain ATCC BAA-895 / CDC 4225-83 / SGSC4696)).